Consider the following 27-residue polypeptide: Toxin TdII-4 (27 aa).

The region spanning 1-27 (KDGYLMEPNGCKLGCLTRPAKYCWXEE) is the LCN-type CS-alpha/beta domain.

The protein belongs to the long (4 C-C) scorpion toxin superfamily. Sodium channel inhibitor family. Beta subfamily. Expressed by the venom gland.

It is found in the secreted. Its function is as follows. Beta toxins bind voltage-independently at site-4 of sodium channels (Nav) and shift the voltage of activation toward more negative potentials thereby affecting sodium channel activation and promoting spontaneous and repetitive firing. This toxin is active against mammals and also affects neuromuscular preparations of frog. The protein is Toxin TdII-4 of Tityus discrepans (Venezuelan scorpion).